We begin with the raw amino-acid sequence, 29 residues long: Small ribosomal subunit protein uS7 (29 aa).

Residues 1-29 (ELIGAANRDTKSFSINRKDAKERVAKAAR) form a disordered region. A compositionally biased stretch (basic and acidic residues) spans 8 to 29 (RDTKSFSINRKDAKERVAKAAR).

This sequence belongs to the universal ribosomal protein uS7 family. Part of the 30S ribosomal subunit.

One of the primary rRNA binding proteins, it binds directly to 16S rRNA where it nucleates assembly of the head domain of the 30S subunit. Is located at the subunit interface close to the decoding center. The protein is Small ribosomal subunit protein uS7 (rps7) of Methanosarcina thermophila.